Here is a 181-residue protein sequence, read N- to C-terminus: Large ribosomal subunit protein uL5 (181 aa).

Belongs to the universal ribosomal protein uL5 family. As to quaternary structure, part of the 50S ribosomal subunit; contacts the 5S rRNA and probably tRNA. Forms a bridge to the 30S subunit in the 70S ribosome.

This is one of the proteins that bind and probably mediate the attachment of the 5S RNA into the large ribosomal subunit, where it forms part of the central protuberance. In the 70S ribosome it contacts protein S13 of the 30S subunit (bridge B1b), connecting the 2 subunits; this bridge is implicated in subunit movement. May contact the P site tRNA; the 5S rRNA and some of its associated proteins might help stabilize positioning of ribosome-bound tRNAs. The polypeptide is Large ribosomal subunit protein uL5 (Methanococcus maripaludis (strain DSM 14266 / JCM 13030 / NBRC 101832 / S2 / LL)).